A 651-amino-acid polypeptide reads, in one-letter code: Translation initiation factor eIF2B subunit delta (651 aa).

The interval 1-108 is disordered; it reads MSESEAKSRS…NERNVKKSTL (108 aa). N-acetylserine is present on Ser-2. Low complexity predominate over residues 11 to 28; it reads ATPPSKAKQATPTTTAAA. Composition is skewed to basic and acidic residues over residues 30–49 and 76–90; these read GEKK…EKAA and KQLQ…EQKQ. Ser-106 carries the post-translational modification Phosphoserine. A Phosphothreonine modification is found at Thr-121. Positions 566–600 are disordered; it reads AMENKPKGNKIGGKKGSEGESKDASNEEDSNSKNI. Residues 580-590 are compositionally biased toward basic and acidic residues; the sequence is KGSEGESKDAS.

This sequence belongs to the eIF-2B alpha/beta/delta subunits family. In terms of assembly, component of the translation initiation factor 2B (eIF2B) complex which is a heterodecamer of two sets of five different subunits: alpha, beta, gamma, delta and epsilon. Subunits alpha, beta and delta comprise a regulatory subcomplex and subunits epsilon and gamma comprise a catalytic subcomplex. Within the complex, the hexameric regulatory complex resides at the center, with the two heterodimeric catalytic subcomplexes bound on opposite sides.

It localises to the cytoplasm. The protein localises to the cytosol. Acts as a component of the translation initiation factor 2B (eIF2B) complex, which catalyzes the exchange of GDP for GTP on the eukaryotic initiation factor 2 (eIF2) complex gamma subunit. Its guanine nucleotide exchange factor activity is repressed when bound to eIF2 complex phosphorylated on the alpha subunit, thereby limiting the amount of methionyl-initiator methionine tRNA available to the ribosome and consequently global translation is repressed. It activates the synthesis of GCN4 in yeast under amino acid starvation conditions by suppressing the inhibitory effects of multiple AUG codons present in the leader of GCN4 mRNA. It may promote either repression or activation of GCN4 expression depending on amino acid availability. GCD2 is also required for cell viability. Its function can partially be replaced by GCN3 under normal growth conditions in GCD2-defective mutants, under AA starvation conditions GCN3 is an antagonist (GCN4 translational activator). This chain is Translation initiation factor eIF2B subunit delta (GCD2), found in Saccharomyces cerevisiae (strain ATCC 204508 / S288c) (Baker's yeast).